The sequence spans 82 residues: Small ribosomal subunit protein uS17 (82 aa).

The protein belongs to the universal ribosomal protein uS17 family. In terms of assembly, part of the 30S ribosomal subunit.

Its function is as follows. One of the primary rRNA binding proteins, it binds specifically to the 5'-end of 16S ribosomal RNA. In Rhodopseudomonas palustris (strain TIE-1), this protein is Small ribosomal subunit protein uS17.